The sequence spans 81 residues: uncharacterized protein (81 aa).

Expressed in fetal brain.

This is an uncharacterized protein from Homo sapiens (Human).